A 336-amino-acid chain; its full sequence is Glyceraldehyde-3-phosphate dehydrogenase (336 aa).

NAD(+) is bound by residues 12 to 13, D34, R78, and T121; that span reads RI. D-glyceraldehyde 3-phosphate contacts are provided by residues 151–153, T182, R199, 212–213, and R235; these read SCT and TG. Residue C152 is the Nucleophile of the active site. Position 316 (N316) interacts with NAD(+).

The protein belongs to the glyceraldehyde-3-phosphate dehydrogenase family. In terms of assembly, homotetramer.

It localises to the cytoplasm. The enzyme catalyses D-glyceraldehyde 3-phosphate + phosphate + NAD(+) = (2R)-3-phospho-glyceroyl phosphate + NADH + H(+). It participates in carbohydrate degradation; glycolysis; pyruvate from D-glyceraldehyde 3-phosphate: step 1/5. In terms of biological role, catalyzes the oxidative phosphorylation of glyceraldehyde 3-phosphate (G3P) to 1,3-bisphosphoglycerate (BPG) using the cofactor NAD. The first reaction step involves the formation of a hemiacetal intermediate between G3P and a cysteine residue, and this hemiacetal intermediate is then oxidized to a thioester, with concomitant reduction of NAD to NADH. The reduced NADH is then exchanged with the second NAD, and the thioester is attacked by a nucleophilic inorganic phosphate to produce BPG. This Streptococcus dysgalactiae subsp. equisimilis (Streptococcus equisimilis) protein is Glyceraldehyde-3-phosphate dehydrogenase (gap).